The primary structure comprises 352 residues: Lipase chaperone (352 aa).

A helical membrane pass occupies residues 7-28 (LSLVAVVVAGGLTLYWRWPAAV).

This sequence belongs to the lipase chaperone family.

Its subcellular location is the cell inner membrane. Functionally, may be involved in the folding of the extracellular lipase during its passage through the periplasm. In Pseudomonas wisconsinensis, this protein is Lipase chaperone (lifO).